Consider the following 47-residue polypeptide: GTCAGQDKPCKETCDCCGERGQCVCEGPCICRQGYFWIAAYKLGNCK.

Intrachain disulfides connect C3–C17, C10–C23, C14–C46, C16–C31, and C25–C29.

As to expression, expressed by the venom gland.

Its subcellular location is the secreted. Functionally, blocks voltage-gated sodium channels (Nav). Causes rapid general spastic paralysis and death when injected in mice at dose levels of less than 2 ug per mouse. The chain is Delta-ctenitoxin-Pr2d from Phoneutria reidyi (Brazilian Amazonian armed spider).